The following is a 195-amino-acid chain: U8 snoRNA-decapping enzyme (195 aa).

The region spanning 18–168 (GWRHACHAML…LENTFIGNAR (151 aa)) is the Nudix hydrolase domain. 3 residues coordinate substrate: histidine 24, arginine 50, and phenylalanine 57. Mn(2+) contacts are provided by glycine 59, glutamate 76, glutamate 80, and histidine 99. Residues 61–82 (FVDLRDGSLEDGLNRELGEELG) carry the Nudix box motif. Residues asparagine 166 and glutamine 170 each coordinate substrate. Residue glutamate 173 participates in Mn(2+) binding.

Belongs to the Nudix hydrolase family. NUDT16 subfamily. In terms of assembly, homodimer. Mg(2+) is required as a cofactor. It depends on Mn(2+) as a cofactor. Co(2+) serves as cofactor.

It localises to the nucleus. The protein localises to the nucleolus. It is found in the nucleoplasm. Its subcellular location is the cytoplasm. It catalyses the reaction a 5'-end (N(7)-methyl 5'-triphosphoguanosine)-ribonucleoside in mRNA + H2O = N(7)-methyl-GDP + a 5'-end phospho-ribonucleoside in mRNA + 2 H(+). The catalysed reaction is IDP + H2O = IMP + phosphate + H(+). It carries out the reaction dIDP + H2O = dIMP + phosphate + H(+). The enzyme catalyses a 5'-end NAD(+)-phospho-ribonucleoside in mRNA + H2O = a 5'-end phospho-ribonucleoside in mRNA + NAD(+) + H(+). It catalyses the reaction a 5'-end FAD-phospho-ribonucleoside in mRNA + H2O = a 5'-end phospho-adenosine-phospho-ribonucleoside in mRNA + FMN + 2 H(+). The catalysed reaction is a 5'-end CoA-ribonucleoside in mRNA + H2O = a 5'-end phospho-adenosine-phospho-ribonucleoside in mRNA + (R)-4'-phosphopantetheine + 2 H(+). In terms of biological role, RNA-binding and decapping enzyme that catalyzes the cleavage of the cap structure of snoRNAs and mRNAs in a metal-dependent manner. Part of the U8 snoRNP complex that is required for the accumulation of mature 5.8S and 28S rRNA. Has diphosphatase activity and removes m7G and/or m227G caps from U8 snoRNA and leaves a 5'monophosphate on the RNA. Also catalyzes the cleavage of the cap structure on mRNAs. Does not hydrolyze cap analog structures like 7-methylguanosine nucleoside triphosphate (m7GpppG). Also hydrolysis m7G- and m227G U3-capped RNAs but with less efficiencies. Has broad substrate specificity with manganese or cobalt as cofactor and can act on various RNA species. Binds to the U8 snoRNA; metal is not required for RNA-binding. May play a role in the regulation of snoRNAs and mRNAs degradation. Also acts as a phosphatase; hydrolyzes the non-canonical purine nucleotides inosine diphosphate (IDP) and deoxyinosine diphosphate (dITP) as well as guanosine diphosphate (GDP), deoxyguanosine diphosphate (dGDP), xanthine diphosphate (XDP), inosine triphosphate (ITP) and deoxyinosine triphosphate (ITP) to their respective monophosphate derivatives and does not distinguish between the deoxy- and ribose forms. The order of activity with different substrates is IDP &gt; dIDP &gt;&gt; GDP = dGDP &gt; XDP = ITP = dITP. Binds strongly to GTP, ITP and XTP. Participates in the hydrolysis of dIDP/IDP and probably excludes non-canonical purines from RNA and DNA precursor pools, thus preventing their incorporation into RNA and DNA and avoiding chromosomal lesions. Exhibits decapping activity towards NAD-capped RNAs and FAD-capped RNAs. Exhibits decapping activity towards dpCoA-capped RNAs in vitro. The sequence is that of U8 snoRNA-decapping enzyme (NUDT16) from Ovis aries (Sheep).